The sequence spans 640 residues: Threonine--tRNA ligase (640 aa).

One can recognise a TGS domain in the interval 1–59 (MKIKVVLPDGSEREYEKGTKPMEIAREVGIKKVIGAVVDEELWDLKRPLERDCRIRFVT). Residues 240-531 (DHRKLGPQLE…LIEHFAGAFP (292 aa)) are catalytic. 3 residues coordinate Zn(2+): C332, H383, and H508.

Belongs to the class-II aminoacyl-tRNA synthetase family. Homodimer. The cofactor is Zn(2+).

The protein resides in the cytoplasm. The enzyme catalyses tRNA(Thr) + L-threonine + ATP = L-threonyl-tRNA(Thr) + AMP + diphosphate + H(+). In terms of biological role, catalyzes the attachment of threonine to tRNA(Thr) in a two-step reaction: L-threonine is first activated by ATP to form Thr-AMP and then transferred to the acceptor end of tRNA(Thr). Also edits incorrectly charged L-seryl-tRNA(Thr). This Thermotoga neapolitana (strain ATCC 49049 / DSM 4359 / NBRC 107923 / NS-E) protein is Threonine--tRNA ligase.